A 124-amino-acid chain; its full sequence is uncharacterized protein (124 aa).

Residues 2–22 (AIIIAIIAAVIVIAALITFNV) traverse the membrane as a helical segment. Residues 24-124 (NASPGPEKQE…ALLSMKNKKK (101 aa)) are disordered. Basic and acidic residues-rich tracts occupy residues 30–58 (EKQE…RAAE), 67–81 (DSPK…DDIY), and 89–113 (KHSD…RSYR).

The protein localises to the membrane. This is an uncharacterized protein from Bacillus subtilis (strain 168).